Here is a 93-residue protein sequence, read N- to C-terminus: uncharacterized protein (93 aa).

The disordered stretch occupies residues 26-73 (NRGTIFRPMTRNSGIVGRRGGPVAPAPFRNNVQKPGTRPPGFKPPSGV).

This is an uncharacterized protein from Caenorhabditis elegans.